Reading from the N-terminus, the 982-residue chain is E3 ubiquitin-protein ligase CBL-B (982 aa).

A 4H region spans residues 35–167; it reads PPKQAAADRR…KAIFPNGQFQ (133 aa). A Cbl-PTB domain is found at 35 to 343; that stretch reads PPKQAAADRR…GRSYNPDLTG (309 aa). An EF-hand-like region spans residues 168–240; that stretch reads GDNFRITKAD…FEFDIFTRLF (73 aa). Ca(2+) contacts are provided by Asp221, Thr223, Asn225, Tyr227, and Glu232. Residues 241–343 are SH2-like; the sequence is QPWGSILRNW…GRSYNPDLTG (103 aa). Position 282 is a phosphoserine; by PKC/PRKCQ (Ser282). Arg286 is a 4-O-phospho-L-tyrosine binding site. The segment at 344-372 is linker; the sequence is LCEPTPHDHIKVTQEQYELYCEMGSTFQL. Tyr363 is subject to Phosphotyrosine. The RING-type zinc-finger motif lies at 373–412; sequence CKICAENDKDVKIEPCGHLMCTSCLTAWQESDGQGCPFCR. Residues 465–588 are disordered; that stretch reads ASVRKCTDRQ…SVPSRDQPMP (124 aa). Positions 473-486 are enriched in polar residues; sequence RQNSPVTSPGSSPL. Residues Ser476, Ser480, Ser484, Ser521, Ser525, and Ser529 each carry the phosphoserine modification. Residues 543–567 are interaction with VAV1; the sequence is PLPAPPPPLRDPPPPPERPPPIPPD. The segment covering 544–566 has biased composition (pro residues); the sequence is LPAPPPPLRDPPPPPERPPPIPP. Ser633 is subject to Phosphoserine. 2 positions are modified to phosphotyrosine: Tyr664 and Tyr708. 2 disordered regions span residues 702-723 and 745-929; these read EDDDDEYKIPSSHPVSLNSQPS and THGA…EAAL. Polar residues predominate over residues 714 to 723; the sequence is HPVSLNSQPS. Over residues 819-828 the composition is skewed to pro residues; sequence PSLPPPPPPA. The segment covering 838–848 has biased composition (low complexity); that stretch reads PPGSSSRPSSG. Polar residues predominate over residues 884-899; it reads RASQDYDQLPSSSDGS. The residue at position 889 (Tyr889) is a Phosphotyrosine. The tract at residues 891–927 is interaction with SH3KBP1; sequence QLPSSSDGSQAPARPPKPRPRRTAPEIHHRKPHGPEA. Residues 906–922 are compositionally biased toward basic residues; sequence PKPRPRRTAPEIHHRKP. The UBA domain maps to 931–970; it reads NVDAKIAKLMGEGYAFEEVKRALEIAQNNVEVARSILREF.

In terms of assembly, interacts with SH3 domain-containing proteins LCK, CRK and SORBS1. Interacts with LCP2 and ZAP70. Interacts with CBL. Interacts with SH3 domain-containing proteins VAV1, FYN, FGR, PLCG1, GRB2, CRKL, PIK3R1 and SH3KBP1/CIN85. Identified in heterotrimeric complexes with SH3KBP1/CIN85, CD2AP and ARHGEF7, where one CBLB peptide binds two copies of the other protein. Interacts with poly-ubiquitinated proteins. Dimerization is required for the binding of poly-ubiquitin, but not for the binding of mono-ubiquitin. Interacts with EGFR (phosphorylated). Interacts with IFT20. Post-translationally, phosphorylated on tyrosine and serine residues upon TCR or BCR activation. Phosphorylated on Tyr-664 and Tyr-708 in adipocytes following insulin stimulation. In terms of processing, auto-ubiquitinated upon EGF-mediated cell activation or upon T-cell costimulation by CD28; which promotes proteasomal degradation.

The protein resides in the cytoplasm. It catalyses the reaction S-ubiquitinyl-[E2 ubiquitin-conjugating enzyme]-L-cysteine + [acceptor protein]-L-lysine = [E2 ubiquitin-conjugating enzyme]-L-cysteine + N(6)-ubiquitinyl-[acceptor protein]-L-lysine.. It participates in protein modification; protein ubiquitination. In terms of biological role, E3 ubiquitin-protein ligase which accepts ubiquitin from specific E2 ubiquitin-conjugating enzymes, and transfers it to substrates, generally promoting their degradation by the proteasome. Negatively regulates TCR (T-cell receptor), BCR (B-cell receptor) and FCER1 (high affinity immunoglobulin epsilon receptor) signal transduction pathways. In naive T-cells, inhibits VAV1 activation upon TCR engagement and imposes a requirement for CD28 costimulation for proliferation and IL-2 production. Also acts by promoting PIK3R1/p85 ubiquitination, which impairs its recruitment to the TCR and subsequent activation. In activated T-cells, inhibits PLCG1 activation and calcium mobilization upon restimulation and promotes anergy. In B-cells, acts by ubiquitinating SYK and promoting its proteasomal degradation. Slightly promotes SRC ubiquitination. May be involved in EGFR ubiquitination and internalization. May be functionally coupled with the E2 ubiquitin-protein ligase UB2D3. In association with CBL, required for proper feedback inhibition of ciliary platelet-derived growth factor receptor-alpha (PDGFRA) signaling pathway via ubiquitination and internalization of PDGFRA. In Mus musculus (Mouse), this protein is E3 ubiquitin-protein ligase CBL-B (Cblb).